The following is a 781-amino-acid chain: Death domain-containing protein 1 (781 aa).

2 consecutive ZU5 domains span residues 167–301 (IMEK…VSCL) and 302–483 (KKES…VLHL). One can recognise a Death domain in the interval 679-764 (DNLLHWLAEE…DLAEELKFKW (86 aa)).

The polypeptide is Death domain-containing protein 1 (DTHD1) (Homo sapiens (Human)).